Consider the following 87-residue polypeptide: DNA-directed RNA polymerase subunit omega (87 aa).

Belongs to the RNA polymerase subunit omega family. As to quaternary structure, the RNAP catalytic core consists of 2 alpha, 1 beta, 1 beta' and 1 omega subunit. When a sigma factor is associated with the core the holoenzyme is formed, which can initiate transcription.

It catalyses the reaction RNA(n) + a ribonucleoside 5'-triphosphate = RNA(n+1) + diphosphate. Functionally, promotes RNA polymerase assembly. Latches the N- and C-terminal regions of the beta' subunit thereby facilitating its interaction with the beta and alpha subunits. The polypeptide is DNA-directed RNA polymerase subunit omega (Leifsonia xyli subsp. xyli (strain CTCB07)).